We begin with the raw amino-acid sequence, 831 residues long: Cysteine--tRNA ligase, cytoplasmic (831 aa).

Alanine 2 is modified (N-acetylalanine). Serine 102 carries the phosphoserine modification. Cysteine 138 is a binding site for Zn(2+). Glycine 139 contributes to the L-cysteine binding site. The 'HIGH' region motif lies at 140 to 150 (PTVYDASHMGH). Threonine 179 is a binding site for L-cysteine. The short motif at 184-187 (KIIR) is the 'KIIK' region element. Serine 388 and serine 390 each carry phosphoserine. Residues cysteine 431, histidine 456, and glutamate 460 each contribute to the Zn(2+) site. Histidine 456 lines the L-cysteine pocket. The 'KMSKS' region signature appears at 489-493 (KMSKS). Position 492 (lysine 492) interacts with ATP. The span at 736 to 762 (GKKRAEEEKRRKKEEAARKKQEQEAAK) shows a compositional bias: basic and acidic residues. The disordered stretch occupies residues 736–766 (GKKRAEEEKRRKKEEAARKKQEQEAAKLAKM). Serine 829 bears the Phosphoserine mark.

Belongs to the class-I aminoacyl-tRNA synthetase family. As to quaternary structure, homodimer. It depends on Zn(2+) as a cofactor.

The protein resides in the cytoplasm. It catalyses the reaction tRNA(Cys) + L-cysteine + ATP = L-cysteinyl-tRNA(Cys) + AMP + diphosphate. In terms of biological role, catalyzes the ATP-dependent ligation of cysteine to tRNA(Cys). This is Cysteine--tRNA ligase, cytoplasmic (Cars1) from Mus musculus (Mouse).